Reading from the N-terminus, the 403-residue chain is Ribosomal RNA large subunit methyltransferase I (403 aa).

One can recognise a PUA domain in the interval 9 to 88 (YPRLVLSKGR…ESIDIAFFTR (80 aa)).

The protein belongs to the methyltransferase superfamily. RlmI family.

Its subcellular location is the cytoplasm. It catalyses the reaction cytidine(1962) in 23S rRNA + S-adenosyl-L-methionine = 5-methylcytidine(1962) in 23S rRNA + S-adenosyl-L-homocysteine + H(+). Specifically methylates the cytosine at position 1962 (m5C1962) of 23S rRNA. This chain is Ribosomal RNA large subunit methyltransferase I, found in Salmonella typhi.